The primary structure comprises 1385 residues: Formin-like protein 7 (1385 aa).

The Phosphatase tensin-type domain maps to Phe-9–Pro-193. The active-site Phosphocysteine intermediate is the Cys-126. The region spanning Asp-199 to Ile-358 is the C2 tensin-type domain. Disordered stretches follow at residues Ile-345–Glu-367, Ala-427–Asn-510, Ser-649–Trp-989, and Lys-1362–Pro-1385. 3 stretches are compositionally biased toward polar residues: residues Lys-349–Ile-358, Thr-448–Gln-470, and Pro-483–Asn-510. 2 stretches are compositionally biased toward pro residues: residues Pro-654 to Lys-665 and Thr-689 to Gln-701. Residues Pro-702–Ser-718 show a composition bias toward low complexity. 3 stretches are compositionally biased toward pro residues: residues Pro-727–Ala-758, Pro-766–Ala-795, and Ala-802–Val-815. Residues Gln-855–Arg-867 show a composition bias toward low complexity. Pro residues-rich tracts occupy residues Ser-895–Lys-906 and Trp-921–Lys-932. Over residues Asn-933 to Gly-942 the composition is skewed to low complexity. The 399-residue stretch at Arg-974–Lys-1372 folds into the FH2 domain.

Belongs to the formin-like family. Class-II subfamily.

The sequence is that of Formin-like protein 7 (FH7) from Oryza sativa subsp. japonica (Rice).